A 677-amino-acid polypeptide reads, in one-letter code: Methionine--tRNA ligase (677 aa).

Positions Pro15 to His25 match the 'HIGH' region motif. Residues Cys146, Cys149, Cys159, and Cys162 each contribute to the Zn(2+) site. Positions Lys333 to Ser337 match the 'KMSKS' region motif. ATP is bound at residue Lys336. One can recognise a tRNA-binding domain in the interval Asp575 to Lys677.

This sequence belongs to the class-I aminoacyl-tRNA synthetase family. MetG type 1 subfamily. In terms of assembly, homodimer. Zn(2+) is required as a cofactor.

The protein localises to the cytoplasm. The enzyme catalyses tRNA(Met) + L-methionine + ATP = L-methionyl-tRNA(Met) + AMP + diphosphate. In terms of biological role, is required not only for elongation of protein synthesis but also for the initiation of all mRNA translation through initiator tRNA(fMet) aminoacylation. This is Methionine--tRNA ligase from Escherichia fergusonii (strain ATCC 35469 / DSM 13698 / CCUG 18766 / IAM 14443 / JCM 21226 / LMG 7866 / NBRC 102419 / NCTC 12128 / CDC 0568-73).